The sequence spans 450 residues: UDP-N-acetylmuramoylalanine--D-glutamate ligase (450 aa).

Residue 112–118 (GSNGKTT) participates in ATP binding.

It belongs to the MurCDEF family.

It localises to the cytoplasm. The enzyme catalyses UDP-N-acetyl-alpha-D-muramoyl-L-alanine + D-glutamate + ATP = UDP-N-acetyl-alpha-D-muramoyl-L-alanyl-D-glutamate + ADP + phosphate + H(+). It participates in cell wall biogenesis; peptidoglycan biosynthesis. In terms of biological role, cell wall formation. Catalyzes the addition of glutamate to the nucleotide precursor UDP-N-acetylmuramoyl-L-alanine (UMA). The polypeptide is UDP-N-acetylmuramoylalanine--D-glutamate ligase (Cytophaga hutchinsonii (strain ATCC 33406 / DSM 1761 / CIP 103989 / NBRC 15051 / NCIMB 9469 / D465)).